A 490-amino-acid polypeptide reads, in one-letter code: Homoserine O-acetyltransferase (490 aa).

One can recognise an AB hydrolase-1 domain in the interval asparagine 47–glutamate 355. Serine 152 functions as the Nucleophile in the catalytic mechanism. Substrate is bound at residue arginine 222. Catalysis depends on residues aspartate 316 and histidine 349. Aspartate 350 contacts substrate. CBS domains follow at residues methionine 376 to valine 436 and methionine 437 to tyrosine 490.

The protein belongs to the AB hydrolase superfamily. MetX family. Homodimer.

Its subcellular location is the cytoplasm. The catalysed reaction is L-homoserine + acetyl-CoA = O-acetyl-L-homoserine + CoA. The protein operates within amino-acid biosynthesis; L-methionine biosynthesis via de novo pathway; O-acetyl-L-homoserine from L-homoserine: step 1/1. Transfers an acetyl group from acetyl-CoA to L-homoserine, forming acetyl-L-homoserine. This Methanobrevibacter ruminantium (strain ATCC 35063 / DSM 1093 / JCM 13430 / OCM 146 / M1) (Methanobacterium ruminantium) protein is Homoserine O-acetyltransferase.